Here is a 507-residue protein sequence, read N- to C-terminus: Sperm-associated antigen 6 (507 aa).

8 ARM repeats span residues 31–70, 73–112, 115–154, 157–196, 199–238, 241–280, 325–365, and 402–441; these read PQNI…RLAN, DDLA…AVGK, PQLA…YIAR, TELS…DISK, PELA…QIAK, VDLA…EIAK, ENLA…QLGR, and KAIK…KVLP.

Interacts with SPAG16 and SPAG17. As to expression, highly expressed in testis. Not detected in prostate, ovary, spleen, thymus, small intestine, colon and peripheral blood leukocytes.

It localises to the cytoplasm. The protein resides in the cytoskeleton. It is found in the cell projection. Its subcellular location is the cilium. The protein localises to the flagellum. It localises to the cilium axoneme. Functionally, important for structural integrity of the central apparatus in the sperm tail and for flagellar motility. The sequence is that of Sperm-associated antigen 6 (Spag6) from Mus musculus (Mouse).